Here is a 197-residue protein sequence, read N- to C-terminus: Histocompatibility antigen 60c (197 aa).

An N-terminal signal peptide occupies residues 1–17 (MALLLLILESCSAGTYA). N-linked (GlcNAc...) asparagine glycosylation is found at N51, N81, and N114. S177 carries GPI-anchor amidated serine lipidation. Residues 178 to 197 (MACKSSPFDGLIMILLIYIL) constitute a propeptide, removed in mature form.

The protein belongs to the NKG2D ligand family. In terms of tissue distribution, expressed in skin, and weakly in large intestine.

Its subcellular location is the cell membrane. Its function is as follows. Ligand for the KLRK1 immunosurveillance receptor. Binding to KLRK1 stimulates cell lysis in vitro. This chain is Histocompatibility antigen 60c, found in Mus musculus (Mouse).